The sequence spans 892 residues: MKSQEITKRWIDFFVSKGHTAVPSASLVSSDPSLLFTVAGMVPFIPYLTAREEAPYNRATSVQKCIRTGDIEEVGKTARHGTFFQMCGNFSFGDYFKEDAIKFAWELLTTSVDDGGYGLPPEKLWVTVYEEDDEAEQLWLKNTGMPAERIQRMGKADNYWSTGQPGPAGPCSEIYYDRGPSYGVEGGPIADENRYVEIWNLVFMQYQIDNVRSKVDFDITGELPKKNIDTGLGMERLAMILQDVENMYETDQVRPVIDKAAALSGKEYTSAESADDPHHTDDVRMRVVADHIRSALMLIADGVTPSNEGRGYVLRRLIRRAVRSMRLLGVEKACLPDLLPASRDAMKGVYPVVETDFDRISRIAYAEEKAFLRTIASGTARLEDAVKDSKAAGQPLSGADAFALHDTYGFPIDLTLEMAEEAGLKVDEPEFRKLMLEQRQRAQADAKGKKGSHADLSAFQELLAEGETVFTGYTELAGESKVRGILSGGRKVSQASTGEEIELVLAETPFYAEAGGQAADTGLITGDGFVVEVLDVQRPVKGLSVHKAIVREGEIGADSLVQAAVDRERRHSAEQAHTGTHIVHAALHQILGPEALQRGSYNKAGYLRFDFAWGEGLSAATRSEIEEVSNLAIRNNFQVETKVMALAEAKALGAMALFGENYGNEVRVVEIDGAWSRELCGGTHVANTSLIGSLSLLGDQSVGSGNRRVEAFVGMEAFRHLAAERALVTELTEMLKVPSGLLADRIATTLTKLKTVEKELERLRKEQLTAAAAQLVGTAKDAAGVKVIAHDAGQVSGADDLRGLALDLRTRLGSEAAAVAVAGVSNDRPVILVATNEAARAAGVKAGALVRLAAGILGGGGGGKDDVAQGGGTDAAKVPAALTAVVDAITRR.

Zn(2+) is bound by residues histidine 577, histidine 581, cysteine 680, and histidine 684.

The protein belongs to the class-II aminoacyl-tRNA synthetase family. Requires Zn(2+) as cofactor.

Its subcellular location is the cytoplasm. It carries out the reaction tRNA(Ala) + L-alanine + ATP = L-alanyl-tRNA(Ala) + AMP + diphosphate. Catalyzes the attachment of alanine to tRNA(Ala) in a two-step reaction: alanine is first activated by ATP to form Ala-AMP and then transferred to the acceptor end of tRNA(Ala). Also edits incorrectly charged Ser-tRNA(Ala) and Gly-tRNA(Ala) via its editing domain. This is Alanine--tRNA ligase from Arthrobacter sp. (strain FB24).